The chain runs to 429 residues: Glutamate-1-semialdehyde 2,1-aminomutase 2 (429 aa).

Lys268 carries the post-translational modification N6-(pyridoxal phosphate)lysine.

The protein belongs to the class-III pyridoxal-phosphate-dependent aminotransferase family. HemL subfamily. In terms of assembly, homodimer. Requires pyridoxal 5'-phosphate as cofactor.

It is found in the cytoplasm. It catalyses the reaction (S)-4-amino-5-oxopentanoate = 5-aminolevulinate. It functions in the pathway porphyrin-containing compound metabolism; protoporphyrin-IX biosynthesis; 5-aminolevulinate from L-glutamyl-tRNA(Glu): step 2/2. The sequence is that of Glutamate-1-semialdehyde 2,1-aminomutase 2 from Geobacillus thermodenitrificans (strain NG80-2).